A 159-amino-acid chain; its full sequence is Peripheral myelin protein 22 (159 aa).

Residue M1 is a topological domain, cytoplasmic. A helical transmembrane segment spans residues 2 to 31 (LLLLLGIIVLHVAVLVLLFVATIVSQWIVG). Topologically, residues 32–64 (NGHATDLWQNCSTTSGNVQHCLSSSANEWLQSV) are extracellular. An N-linked (GlcNAc...) asparagine glycan is attached at N41. The chain crosses the membrane as a helical span at residues 65 to 91 (QATMILSIIFSVLSLFLFFCQLFTLTK). The Cytoplasmic portion of the chain corresponds to 92 to 95 (GGRF). Residues 96–119 (YITGIFQILAGLCVMSAASIYTVR) form a helical membrane-spanning segment. Topologically, residues 120–133 (HPEWHLDSAYSYGF) are extracellular. Residues 134–156 (AYILAWVAFPLALLSGVVYVILR) form a helical membrane-spanning segment. At 157 to 159 (KRE) the chain is on the cytoplasmic side.

This sequence belongs to the PMP-22/EMP/MP20 family. In terms of processing, ubiquitinated by the DCX(DCAF13) E3 ubiquitin ligase complex, leading to its degradation.

It localises to the cell membrane. Its function is as follows. Might be involved in growth regulation, and in myelinization in the peripheral nervous system. This Equus caballus (Horse) protein is Peripheral myelin protein 22 (PMP22).